The chain runs to 108 residues: Putative double-stranded DNA mimic protein PBPRA1522 (108 aa).

It belongs to the putative dsDNA mimic protein family.

Functionally, may act as a double-stranded DNA (dsDNA) mimic. Probably regulates the activity of a dsDNA-binding protein. This is Putative double-stranded DNA mimic protein PBPRA1522 from Photobacterium profundum (strain SS9).